Reading from the N-terminus, the 492-residue chain is Bifunctional protein GlmU (492 aa).

Residues 1–241 (MTFRGDTAVV…SALVAGVNDR (241 aa)) form a pyrophosphorylase region. UDP-N-acetyl-alpha-D-glucosamine-binding positions include 12–15 (LAAG), Lys-26, Gln-83, and 88–89 (GT). Mg(2+) is bound at residue Asp-114. UDP-N-acetyl-alpha-D-glucosamine is bound by residues Gly-151, Glu-166, Asn-181, and Asn-239. Asn-239 lines the Mg(2+) pocket. The interval 242 to 262 (VQLAQLGAELNRRIVAAHQMA) is linker. Residues 263–492 (GVTVIDPATT…TPPPDADHPP (230 aa)) form an N-acetyltransferase region. UDP-N-acetyl-alpha-D-glucosamine is bound by residues Arg-344 and Lys-362. His-374 functions as the Proton acceptor in the catalytic mechanism. UDP-N-acetyl-alpha-D-glucosamine contacts are provided by Tyr-377 and Asn-388. Acetyl-CoA contacts are provided by residues Ala-391, 397–398 (NY), and Ala-434. Positions 443 to 492 (PPGALAVSGGPQRNIEDWVQQKRPGTPSAEAARKASAEQSTPPPDADHPP) are disordered.

In the N-terminal section; belongs to the N-acetylglucosamine-1-phosphate uridyltransferase family. This sequence in the C-terminal section; belongs to the transferase hexapeptide repeat family. Homotrimer. Mg(2+) is required as a cofactor.

The protein resides in the cytoplasm. The enzyme catalyses alpha-D-glucosamine 1-phosphate + acetyl-CoA = N-acetyl-alpha-D-glucosamine 1-phosphate + CoA + H(+). The catalysed reaction is N-acetyl-alpha-D-glucosamine 1-phosphate + UTP + H(+) = UDP-N-acetyl-alpha-D-glucosamine + diphosphate. It participates in nucleotide-sugar biosynthesis; UDP-N-acetyl-alpha-D-glucosamine biosynthesis; N-acetyl-alpha-D-glucosamine 1-phosphate from alpha-D-glucosamine 6-phosphate (route II): step 2/2. The protein operates within nucleotide-sugar biosynthesis; UDP-N-acetyl-alpha-D-glucosamine biosynthesis; UDP-N-acetyl-alpha-D-glucosamine from N-acetyl-alpha-D-glucosamine 1-phosphate: step 1/1. It functions in the pathway bacterial outer membrane biogenesis; LPS lipid A biosynthesis. In terms of biological role, catalyzes the last two sequential reactions in the de novo biosynthetic pathway for UDP-N-acetylglucosamine (UDP-GlcNAc). The C-terminal domain catalyzes the transfer of acetyl group from acetyl coenzyme A to glucosamine-1-phosphate (GlcN-1-P) to produce N-acetylglucosamine-1-phosphate (GlcNAc-1-P), which is converted into UDP-GlcNAc by the transfer of uridine 5-monophosphate (from uridine 5-triphosphate), a reaction catalyzed by the N-terminal domain. The chain is Bifunctional protein GlmU from Mycobacterium ulcerans (strain Agy99).